We begin with the raw amino-acid sequence, 807 residues long: 1,4-alpha-glucan branching enzyme GlgB (807 aa).

Asp-405 functions as the Nucleophile in the catalytic mechanism. Catalysis depends on Glu-458, which acts as the Proton donor.

It belongs to the glycosyl hydrolase 13 family. GlgB subfamily. As to quaternary structure, monomer.

It carries out the reaction Transfers a segment of a (1-&gt;4)-alpha-D-glucan chain to a primary hydroxy group in a similar glucan chain.. It participates in glycan biosynthesis; glycogen biosynthesis. Catalyzes the formation of the alpha-1,6-glucosidic linkages in glycogen by scission of a 1,4-alpha-linked oligosaccharide from growing alpha-1,4-glucan chains and the subsequent attachment of the oligosaccharide to the alpha-1,6 position. This Histophilus somni (strain 129Pt) (Haemophilus somnus) protein is 1,4-alpha-glucan branching enzyme GlgB.